The sequence spans 546 residues: Pectinesterase 1 (546 aa).

The signal sequence occupies residues 1 to 39 (MANPQQPLLIKTHKQNPIISFKILSFVITLFVALFLVAP). The propeptide occupies 40 to 229 (YQVEIKHSNL…RKLMESSGKD (190 aa)). Substrate is bound by residues threonine 308 and glutamine 338. Cysteines 327 and 354 form a disulfide. The Proton donor role is filled by aspartate 361. Aspartate 382 functions as the Nucleophile in the catalytic mechanism. Cysteine 395 and cysteine 429 form a disulfide bridge. Residues arginine 450 and tryptophan 452 each coordinate substrate.

The protein in the N-terminal section; belongs to the PMEI family. This sequence in the C-terminal section; belongs to the pectinesterase family.

It localises to the secreted. Its subcellular location is the cell wall. It catalyses the reaction [(1-&gt;4)-alpha-D-galacturonosyl methyl ester](n) + n H2O = [(1-&gt;4)-alpha-D-galacturonosyl](n) + n methanol + n H(+). It participates in glycan metabolism; pectin degradation; 2-dehydro-3-deoxy-D-gluconate from pectin: step 1/5. Its function is as follows. Pectinesterase may play a role in cell wall metabolism during fruit growth and development prior to ripening and may be required for preparing cell walls for softening by polygalacturonase during fruit ripening. The sequence is that of Pectinesterase 1 (PME1.9) from Solanum lycopersicum (Tomato).